The chain runs to 161 residues: Large ribosomal subunit protein uL23m (161 aa).

The N-terminal 34 residues, 1 to 34 (MSKIAGKRLVYFPNITFTLCRGLNLQPKFAVFRV), are a transit peptide targeting the mitochondrion.

This sequence belongs to the universal ribosomal protein uL23 family. As to quaternary structure, component of the mitochondrial large ribosomal subunit (mt-LSU). Mature yeast 74S mitochondrial ribosomes consist of a small (37S) and a large (54S) subunit. The 37S small subunit contains a 15S ribosomal RNA (15S mt-rRNA) and at least 32 different proteins. The 54S large subunit contains a 21S rRNA (21S mt-rRNA) and at least 45 different proteins. uL23m forms the wall of the exit tunnel. Interacts with the C-terminus of OXA1.

The protein resides in the mitochondrion. Its function is as follows. Component of the mitochondrial ribosome (mitoribosome), a dedicated translation machinery responsible for the synthesis of mitochondrial genome-encoded proteins, including at least some of the essential transmembrane subunits of the mitochondrial respiratory chain. The mitoribosomes are attached to the mitochondrial inner membrane and translation products are cotranslationally integrated into the membrane. The sequence is that of Large ribosomal subunit protein uL23m (mrp20) from Schizosaccharomyces pombe (strain 972 / ATCC 24843) (Fission yeast).